A 560-amino-acid polypeptide reads, in one-letter code: Transcription termination factor 5, mitochondrial (560 aa).

The N-terminal 23 residues, 1 to 23 (MLRNGQNQAQLLARSLGQLARGM), are a transit peptide targeting the mitochondrion. The tract at residues 23-47 (MASSKRVSSKKEDLKPKLPKPPTVE) is disordered.

The protein belongs to the mTERF family. Probably binds to the mTTF-DNA complex.

The protein localises to the mitochondrion. In terms of biological role, binds promoter DNA and regulates initiation of transcription. Regulates mitochondrial replication and transcription. Required for normal topology and maintenance of mitochondrial DNA (mtDNA) levels. Regulates mtDNA replication by re-activating replication after replication pausing. Likely to regulate replication pausing by coordinating with the mitochondrial termination factor mTTF which promotes replication pausing. Their function in replication pausing prevents unregulated replication that may occur for example by collisions between the machineries of DNA replication and transcription during mtDNA synthesis. This ensures the incorporation of RNA transcripts into replication intermediates at the replication fork and allows for proper fork progression. Possibly functions downstream of Dref which activates genes involved in mtDNA replication and maintenance. This is Transcription termination factor 5, mitochondrial from Drosophila melanogaster (Fruit fly).